A 634-amino-acid chain; its full sequence is Growth hormone receptor (634 aa).

The signal sequence occupies residues 1–18; the sequence is MDLWQLLLTLAVAGSSDA. Topologically, residues 19-260 are extracellular; it reads FSGSEATPAF…NPSACEEDFQ (242 aa). A glycan (N-linked (GlcNAc...) asparagine) is linked at Asn46. Residues Cys56 and Cys66 are joined by a disulfide bond. Asn73 is a glycosylation site (N-linked (GlcNAc...) asparagine). A disulfide bridge links Cys97 with Cys108. An N-linked (GlcNAc...) asparagine glycan is attached at Asn111. A disulfide bridge connects residues Cys122 and Cys136. Positions 147–250 constitute a Fibronectin type-III domain; that stretch reads PPVGLNWTLL…EVLLITFPQM (104 aa). N-linked (GlcNAc...) asparagine glycosylation is found at Asn152, Asn157, and Asn196. The WSXWS motif signature appears at 236–240; the sequence is YGKFS. Residues 261–284 traverse the membrane as a helical segment; sequence FPWFLIIIFGILGLTVTLFLLIFS. The Cytoplasmic segment spans residues 285–634; that stretch reads KQQRIKMLIL…STDQLNKIMP (350 aa). The tract at residues 290–375 is required for JAK2 binding; that stretch reads KMLILPPVPV…HEKSLSIFGA (86 aa). The Box 1 motif motif lies at 293–301; that stretch reads ILPPVPVPK. Residues 336 to 345 carry the UbE motif motif; the sequence is DSWVEFIELD. Residue Ser337 is modified to Phosphoserine. A disordered region spans residues 451 to 471; the sequence is KPRPLPIGGTESTHQAVHTQL. Residues 460–471 show a composition bias toward polar residues; that stretch reads TESTHQAVHTQL. Phosphotyrosine occurs at positions 483 and 591.

It belongs to the type I cytokine receptor family. Type 1 subfamily. In terms of assembly, on growth hormone (GH) binding, forms homodimers and binds JAK2 via a box 1-containing domain. In terms of processing, the soluble form (GHBP) is produced by phorbol ester-promoted proteolytic cleavage at the cell surface (shedding) by ADAM17/TACE. Shedding is inhibited by growth hormone (GH) binding to the receptor probably due to a conformational change in GHR rendering the receptor inaccessible to ADAM17. On GH binding, phosphorylated on tyrosine residues in the cytoplasmic domain by JAK2. Post-translationally, ubiquitinated by the ECS(SOCS2) complex following ligand-binding and phosphorylation by JAK2, leading to its degradation by the proteasome. Regulation by the ECS(SOCS2) complex acts as a negative feedback loop of growth hormone receptor signaling. Ubiquitination is not sufficient for GHR internalization.

Its subcellular location is the cell membrane. The protein localises to the secreted. Functionally, receptor for pituitary gland growth hormone (GH1) involved in regulating postnatal body growth. On ligand binding, couples to the JAK2/STAT5 pathway. The soluble form (GHBP) acts as a reservoir of growth hormone in plasma and may be a modulator/inhibitor of GH signaling. This is Growth hormone receptor (GHR) from Ovis aries (Sheep).